Here is a 498-residue protein sequence, read N- to C-terminus: Trehalose-6-phosphate synthase (498 aa).

R28 contacts D-glucose 6-phosphate. A UDP-alpha-D-glucose-binding site is contributed by 48–49 (GG). 2 residues coordinate D-glucose 6-phosphate: Y106 and D160. The UDP-alpha-D-glucose site is built by R302 and K307. R340 contacts D-glucose 6-phosphate. UDP-alpha-D-glucose is bound at residue 405–409 (LVAKE).

The protein belongs to the glycosyltransferase 20 family. Homotetramer.

It catalyses the reaction ADP-alpha-D-glucose + D-glucose 6-phosphate = alpha,alpha-trehalose 6-phosphate + ADP + H(+). The enzyme catalyses CDP-alpha-D-glucose + D-glucose 6-phosphate = alpha,alpha-trehalose 6-phosphate + CDP + H(+). The catalysed reaction is GDP-alpha-D-glucose + D-glucose 6-phosphate = alpha,alpha-trehalose 6-phosphate + GDP + H(+). It carries out the reaction TDP-alpha-D-glucose + D-glucose 6-phosphate = 5-methyl-UDP + alpha,alpha-trehalose 6-phosphate + H(+). It catalyses the reaction D-glucose 6-phosphate + UDP-alpha-D-glucose = alpha,alpha-trehalose 6-phosphate + UDP + H(+). Its pathway is glycan biosynthesis; trehalose biosynthesis. Probably involved in the osmoprotection via the biosynthesis of trehalose and in the production of glycogen and alpha-glucan via the TreS-Pep2 branch involved in the biosynthesis of maltose-1-phosphate (M1P). Catalyzes the transfer of glucose from UDP-glucose (UDP-Glc) to D-glucose 6-phosphate (Glc-6-P) to form trehalose-6-phosphate. Probably also able to use ADP-Glc, CDP-Glc, GDP-Glc and TDP-Glc as glucosyl donors. The polypeptide is Trehalose-6-phosphate synthase (Mycobacterium leprae (strain TN)).